Reading from the N-terminus, the 940-residue chain is Valine--tRNA ligase (940 aa).

The 'HIGH' region signature appears at 47 to 57 (PNVTGVLHMGH). Residues 564 to 568 (KLSKS) carry the 'KMSKS' region motif. K567 contributes to the ATP binding site. The stretch at 873–905 (EEHLLKEKGRLEKERVRLERAVENLERLLGDES) forms a coiled coil.

It belongs to the class-I aminoacyl-tRNA synthetase family. ValS type 1 subfamily. As to quaternary structure, monomer.

The protein resides in the cytoplasm. The catalysed reaction is tRNA(Val) + L-valine + ATP = L-valyl-tRNA(Val) + AMP + diphosphate. In terms of biological role, catalyzes the attachment of valine to tRNA(Val). As ValRS can inadvertently accommodate and process structurally similar amino acids such as threonine, to avoid such errors, it has a 'posttransfer' editing activity that hydrolyzes mischarged Thr-tRNA(Val) in a tRNA-dependent manner. The protein is Valine--tRNA ligase of Chlamydia pneumoniae (Chlamydophila pneumoniae).